The primary structure comprises 248 residues: E3 ubiquitin-protein ligase BIG BROTHER (248 aa).

An RING-type; atypical zinc finger spans residues Cys-197–Asn-238.

As to quaternary structure, interacts with the E2 ubiquitin conjugating enzyme UBC10 via the RING domain. Interacts with DA1. In terms of processing, auto-ubiquitinated. As to expression, mostly expressed in inflorescence, and, to a lower extent, in seedlings, roots, stems, leaves and siliques.

It catalyses the reaction S-ubiquitinyl-[E2 ubiquitin-conjugating enzyme]-L-cysteine + [acceptor protein]-L-lysine = [E2 ubiquitin-conjugating enzyme]-L-cysteine + N(6)-ubiquitinyl-[acceptor protein]-L-lysine.. The protein operates within protein modification; protein ubiquitination. Functionally, E3 ubiquitin-protein ligase that limits organ size, and possibly seed size, in a dose-dependent manner. Negatively regulates the duration of cell proliferation in leaves and petals independently of the major phytohormones (e.g. auxin, cytokinin, gibberellin, brassinosteroids, ethylene, abscisic acid, jasmonic acid), probably by targeting growth stimulators for degradation. Limits the proliferation of root meristematic cells. Polyubiquitinates DA1. Involved in the promotion of leaf senescence, in addition to its function in restricting plant growth. Possesses E3 ubiquitin-protein ligase activity in vitro. This Arabidopsis thaliana (Mouse-ear cress) protein is E3 ubiquitin-protein ligase BIG BROTHER (BB).